We begin with the raw amino-acid sequence, 137 residues long: Large-conductance mechanosensitive channel (137 aa).

The next 2 helical transmembrane spans lie at 10 to 30 (FAMRGNVVDLAVGVIIGAAFG) and 76 to 96 (GTFIQSIFDFVIVALAIFSAV).

Belongs to the MscL family. Homopentamer.

The protein resides in the cell inner membrane. Functionally, channel that opens in response to stretch forces in the membrane lipid bilayer. May participate in the regulation of osmotic pressure changes within the cell. The protein is Large-conductance mechanosensitive channel of Yersinia pseudotuberculosis serotype O:1b (strain IP 31758).